Reading from the N-terminus, the 474-residue chain is mRNA cap guanine-N(7) methyltransferase (474 aa).

Residues 1 to 12 show a composition bias toward polar residues; sequence MSTDSYTPSQEP. Residues 1–106 form a disordered region; the sequence is MSTDSYTPSQ…GHEGDEGDED (106 aa). A compositionally biased stretch (basic and acidic residues) spans 56–100; it reads SDIDGKYDKYGERRNAHTTTRDSRLDRLKRVRQKSAEREDVGHEG. An mRNA cap 0 methyltransferase domain is found at 170–474; it reads SPIYKMRNFN…FYIGFVFEKV (305 aa). 179–180 is an mRNA binding site; sequence NN. Positions 183, 207, 229, 269, 299, and 304 each coordinate S-adenosyl-L-methionine.

It belongs to the class I-like SAM-binding methyltransferase superfamily. mRNA cap 0 methyltransferase family.

The protein localises to the nucleus. The enzyme catalyses a 5'-end (5'-triphosphoguanosine)-ribonucleoside in mRNA + S-adenosyl-L-methionine = a 5'-end (N(7)-methyl 5'-triphosphoguanosine)-ribonucleoside in mRNA + S-adenosyl-L-homocysteine. In terms of biological role, responsible for methylating the 5'-cap structure of mRNAs. This is mRNA cap guanine-N(7) methyltransferase (ABD1) from Candida albicans (strain SC5314 / ATCC MYA-2876) (Yeast).